The following is a 216-amino-acid chain: Probable transaldolase (216 aa).

Residue K83 is the Schiff-base intermediate with substrate of the active site.

It belongs to the transaldolase family. Type 3B subfamily.

It is found in the cytoplasm. The enzyme catalyses D-sedoheptulose 7-phosphate + D-glyceraldehyde 3-phosphate = D-erythrose 4-phosphate + beta-D-fructose 6-phosphate. It participates in carbohydrate degradation; pentose phosphate pathway; D-glyceraldehyde 3-phosphate and beta-D-fructose 6-phosphate from D-ribose 5-phosphate and D-xylulose 5-phosphate (non-oxidative stage): step 2/3. Transaldolase is important for the balance of metabolites in the pentose-phosphate pathway. The protein is Probable transaldolase of Hyphomonas neptunium (strain ATCC 15444).